The sequence spans 1003 residues: Trifunctional purine biosynthetic protein adenosine-3 (1003 aa).

Positions 111–318 constitute an ATP-grasp domain; the sequence is KSFLDRHGIP…LYEVMQAVIN (208 aa). ATP-binding positions include 190 to 193, Glu-197, Arg-220, and Asn-229; that span reads EELL. The disordered stretch occupies residues 214-235; sequence PAQDHKRLKDGDEGPNTGGMGA. The segment covering 216–225 has biased composition (basic and acidic residues); it reads QDHKRLKDGD. The Mg(2+) site is built by Glu-288 and Asn-290. The interval 434-805 is AIRS domain; that stretch reads GLTYKNSGVD…QGKIQTNKVK (372 aa). Positions 806–1003 are GART domain; that stretch reads VAVLISGTGT…VGEAGKICWK (198 aa). Residue 814-816 coordinates N(1)-(5-phospho-beta-D-ribosyl)glycinamide; the sequence is GTN. Residues Arg-867, 892 to 895, and Asn-909 contribute to the (6R)-10-formyltetrahydrofolate site; that span reads MRIL. Residue His-911 is the Proton donor of the active site. Position 943 to 947 (943 to 947) interacts with (6R)-10-formyltetrahydrofolate; that stretch reads AEEVD. 973 to 976 contacts N(1)-(5-phospho-beta-D-ribosyl)glycinamide; it reads KEAE.

The protein in the N-terminal section; belongs to the GARS family. It in the central section; belongs to the AIR synthase family. This sequence in the C-terminal section; belongs to the GART family. As to quaternary structure, homodimer. Mg(2+) is required as a cofactor. Requires Mn(2+) as cofactor.

It catalyses the reaction 5-phospho-beta-D-ribosylamine + glycine + ATP = N(1)-(5-phospho-beta-D-ribosyl)glycinamide + ADP + phosphate + H(+). The catalysed reaction is 2-formamido-N(1)-(5-O-phospho-beta-D-ribosyl)acetamidine + ATP = 5-amino-1-(5-phospho-beta-D-ribosyl)imidazole + ADP + phosphate + H(+). It carries out the reaction N(1)-(5-phospho-beta-D-ribosyl)glycinamide + (6R)-10-formyltetrahydrofolate = N(2)-formyl-N(1)-(5-phospho-beta-D-ribosyl)glycinamide + (6S)-5,6,7,8-tetrahydrofolate + H(+). The protein operates within purine metabolism; IMP biosynthesis via de novo pathway; 5-amino-1-(5-phospho-D-ribosyl)imidazole from N(2)-formyl-N(1)-(5-phospho-D-ribosyl)glycinamide: step 2/2. It functions in the pathway purine metabolism; IMP biosynthesis via de novo pathway; N(1)-(5-phospho-D-ribosyl)glycinamide from 5-phospho-alpha-D-ribose 1-diphosphate: step 2/2. Its pathway is purine metabolism; IMP biosynthesis via de novo pathway; N(2)-formyl-N(1)-(5-phospho-D-ribosyl)glycinamide from N(1)-(5-phospho-D-ribosyl)glycinamide (10-formyl THF route): step 1/1. Functionally, trifunctional enzyme that catalyzes three distinct reactions as part of the 'de novo' inosine monophosphate biosynthetic pathway. The polypeptide is Trifunctional purine biosynthetic protein adenosine-3 (GART) (Gallus gallus (Chicken)).